Consider the following 104-residue polypeptide: N(4)-acetylcytidine amidohydrolase (104 aa).

One can recognise an ASCH domain in the interval 6–102 (TFYTRFQQDI…ELYVIAFKKV (97 aa)). Lysine 20 (proton acceptor) is an active-site residue. The active-site Nucleophile is the threonine 23. The active-site Proton donor is the glutamate 73.

The protein belongs to the N(4)-acetylcytidine amidohydrolase family.

The catalysed reaction is N(4)-acetylcytidine + H2O = cytidine + acetate + H(+). It carries out the reaction N(4)-acetyl-2'-deoxycytidine + H2O = 2'-deoxycytidine + acetate + H(+). It catalyses the reaction N(4)-acetylcytosine + H2O = cytosine + acetate + H(+). In terms of biological role, catalyzes the hydrolysis of N(4)-acetylcytidine (ac4C). The polypeptide is N(4)-acetylcytidine amidohydrolase (Cronobacter sakazakii (strain ATCC BAA-894) (Enterobacter sakazakii)).